Reading from the N-terminus, the 234-residue chain is MKDEIFKNEIKKQFEFDENVASVFDDMISRSVPYYRESCELSGEILARSLKEKAKIIDLGCSTAEFLIALHHKRPDFELFGVDNSESMLKIAKRKSMAHGAKIDFKNEDILNCDLKGFDCAILNYTLQFIRPIKRSDFVAKIYSNLANNGILIMAEKLIYDDKTLAAQMIEIYENYKQKQGYSAFEIAQKRKALENILIPFSETENRQMLKNAGFKIVEVIFKWANFAVFLAKK.

Residues Tyr-35, 60–62, 83–84, 109–110, Asn-124, and Arg-191 contribute to the S-adenosyl-L-methionine site; these read GCS, DN, and DI.

The protein belongs to the class I-like SAM-binding methyltransferase superfamily. Cx-SAM synthase family. Homodimer.

It carries out the reaction prephenate + S-adenosyl-L-methionine = carboxy-S-adenosyl-L-methionine + 3-phenylpyruvate + H2O. Its function is as follows. Catalyzes the conversion of S-adenosyl-L-methionine (SAM) to carboxy-S-adenosyl-L-methionine (Cx-SAM). In Campylobacter hominis (strain ATCC BAA-381 / DSM 21671 / CCUG 45161 / LMG 19568 / NCTC 13146 / CH001A), this protein is Carboxy-S-adenosyl-L-methionine synthase.